The following is a 231-amino-acid chain: NKG2-C type II integral membrane protein (231 aa).

Residues 1-12 (MNKQRGTFSEVS) show a composition bias toward polar residues. Residues 1-31 (MNKQRGTFSEVSLAQDPKRQQRKPKDNKSSI) are disordered. At 1-70 (MNKQRGTFSE…CQGLLPPPEK (70 aa)) the chain is on the cytoplasmic side. Residues 16-28 (DPKRQQRKPKDNK) are compositionally biased toward basic and acidic residues. A helical; Signal-anchor for type II membrane protein membrane pass occupies residues 71 to 93 (LTAEVLGIICIVLMATVLKTVVL). The Extracellular segment spans residues 94-231 (IPFLEQNNSF…SKRYYCKHKL (138 aa)). Residue N100 is glycosylated (N-linked (GlcNAc...) asparagine). A C-type lectin domain is found at 116–229 (HCPEEWITYS…GSSKRYYCKH (114 aa)). Cystine bridges form between C117/C128, C145/C227, and C206/C219. A glycan (N-linked (GlcNAc...) asparagine) is linked at N149.

Heterodimer with KLRD1; disulfide-linked. KLRD1-KLRC2 receptor complex interacts with TYROBP/DAP12 homodimer; this interaction is necessary for the expression on the cell surface. As to expression, natural killer cells.

It localises to the cell membrane. Functionally, immune activating receptor involved in self-nonself discrimination. In complex with KLRD1 on cytotoxic lymphocyte subsets, recognizes non-classical major histocompatibility MHC-E loaded with signal sequence-derived peptides from non-classical MHC-G molecules, likely playing a role in the generation and effector functions of adaptive natural killer (NK) cells and in maternal-fetal tolerance during pregnancy. Regulates the effector functions of terminally differentiated cytotoxic lymphocyte subsets, and in particular may play a role in adaptive NK cell response to viral infection. Upon MHC-E-peptide binding, transmits intracellular signals via the adapter protein TYROBP/DAP12, triggering the phosphorylation of proximal signaling molecules and cell activation. The polypeptide is NKG2-C type II integral membrane protein (KLRC2) (Macaca mulatta (Rhesus macaque)).